The sequence spans 152 residues: UPF0225 protein YchJ (152 aa).

Belongs to the UPF0225 family.

In Escherichia coli O6:K15:H31 (strain 536 / UPEC), this protein is UPF0225 protein YchJ.